A 320-amino-acid polypeptide reads, in one-letter code: Malate dehydrogenase (320 aa).

NAD(+)-binding positions include 10–15 (GSGMIG) and D34. Substrate contacts are provided by R83 and R89. NAD(+) contacts are provided by residues N96 and 119–121 (ITN). The substrate site is built by N121 and R152. H176 functions as the Proton acceptor in the catalytic mechanism.

It belongs to the LDH/MDH superfamily. MDH type 3 family.

It carries out the reaction (S)-malate + NAD(+) = oxaloacetate + NADH + H(+). Catalyzes the reversible oxidation of malate to oxaloacetate. This chain is Malate dehydrogenase, found in Allorhizobium ampelinum (strain ATCC BAA-846 / DSM 112012 / S4) (Agrobacterium vitis (strain S4)).